Consider the following 230-residue polypeptide: Uracil-DNA glycosylase (230 aa).

The active-site Proton acceptor is aspartate 70.

Belongs to the uracil-DNA glycosylase (UDG) superfamily. UNG family.

Its subcellular location is the cytoplasm. It carries out the reaction Hydrolyzes single-stranded DNA or mismatched double-stranded DNA and polynucleotides, releasing free uracil.. Its function is as follows. Excises uracil residues from the DNA which can arise as a result of misincorporation of dUMP residues by DNA polymerase or due to deamination of cytosine. The protein is Uracil-DNA glycosylase of Pseudomonas entomophila (strain L48).